A 503-amino-acid polypeptide reads, in one-letter code: ATP synthase subunit alpha, chloroplastic (503 aa).

ATP is bound at residue Gly-170–Thr-177.

Belongs to the ATPase alpha/beta chains family. In terms of assembly, F-type ATPases have 2 components, CF(1) - the catalytic core - and CF(0) - the membrane proton channel. CF(1) has five subunits: alpha(3), beta(3), gamma(1), delta(1), epsilon(1). CF(0) has four main subunits: a, b, b' and c.

Its subcellular location is the plastid. The protein localises to the chloroplast thylakoid membrane. The enzyme catalyses ATP + H2O + 4 H(+)(in) = ADP + phosphate + 5 H(+)(out). Functionally, produces ATP from ADP in the presence of a proton gradient across the membrane. The alpha chain is a regulatory subunit. This Trieres chinensis (Marine centric diatom) protein is ATP synthase subunit alpha, chloroplastic.